The primary structure comprises 330 residues: Beta-ketoacyl-[acyl-carrier-protein] synthase III (330 aa).

Active-site residues include cysteine 115 and histidine 255. Positions 256–260 (QANFR) are ACP-binding. The active site involves asparagine 285.

Belongs to the thiolase-like superfamily. FabH family. Homodimer.

The protein resides in the cytoplasm. It carries out the reaction malonyl-[ACP] + acetyl-CoA + H(+) = 3-oxobutanoyl-[ACP] + CO2 + CoA. It functions in the pathway lipid metabolism; fatty acid biosynthesis. In terms of biological role, catalyzes the condensation reaction of fatty acid synthesis by the addition to an acyl acceptor of two carbons from malonyl-ACP. Catalyzes the first condensation reaction which initiates fatty acid synthesis and may therefore play a role in governing the total rate of fatty acid production. Possesses both acetoacetyl-ACP synthase and acetyl transacylase activities. Its substrate specificity determines the biosynthesis of branched-chain and/or straight-chain of fatty acids. This chain is Beta-ketoacyl-[acyl-carrier-protein] synthase III, found in Helicobacter pylori (strain HPAG1).